An 89-amino-acid chain; its full sequence is Small ribosomal subunit protein uS15 (89 aa).

This sequence belongs to the universal ribosomal protein uS15 family. Part of the 30S ribosomal subunit. Forms a bridge to the 50S subunit in the 70S ribosome, contacting the 23S rRNA.

In terms of biological role, one of the primary rRNA binding proteins, it binds directly to 16S rRNA where it helps nucleate assembly of the platform of the 30S subunit by binding and bridging several RNA helices of the 16S rRNA. Its function is as follows. Forms an intersubunit bridge (bridge B4) with the 23S rRNA of the 50S subunit in the ribosome. The sequence is that of Small ribosomal subunit protein uS15 from Burkholderia ambifaria (strain MC40-6).